We begin with the raw amino-acid sequence, 146 residues long: Putative pre-16S rRNA nuclease (146 aa).

The protein belongs to the YqgF nuclease family.

The protein localises to the cytoplasm. In terms of biological role, could be a nuclease involved in processing of the 5'-end of pre-16S rRNA. This is Putative pre-16S rRNA nuclease from Paraburkholderia phytofirmans (strain DSM 17436 / LMG 22146 / PsJN) (Burkholderia phytofirmans).